Consider the following 212-residue polypeptide: ATP phosphoribosyltransferase (212 aa).

Belongs to the ATP phosphoribosyltransferase family. Short subfamily. In terms of assembly, heteromultimer composed of HisG and HisZ subunits.

It is found in the cytoplasm. The enzyme catalyses 1-(5-phospho-beta-D-ribosyl)-ATP + diphosphate = 5-phospho-alpha-D-ribose 1-diphosphate + ATP. The protein operates within amino-acid biosynthesis; L-histidine biosynthesis; L-histidine from 5-phospho-alpha-D-ribose 1-diphosphate: step 1/9. Catalyzes the condensation of ATP and 5-phosphoribose 1-diphosphate to form N'-(5'-phosphoribosyl)-ATP (PR-ATP). Has a crucial role in the pathway because the rate of histidine biosynthesis seems to be controlled primarily by regulation of HisG enzymatic activity. In Clostridium botulinum (strain Okra / Type B1), this protein is ATP phosphoribosyltransferase.